The following is a 343-amino-acid chain: N-acetyl-gamma-glutamyl-phosphate reductase (343 aa).

The active site involves Cys-149.

It belongs to the NAGSA dehydrogenase family. Type 1 subfamily.

It is found in the cytoplasm. It carries out the reaction N-acetyl-L-glutamate 5-semialdehyde + phosphate + NADP(+) = N-acetyl-L-glutamyl 5-phosphate + NADPH + H(+). It functions in the pathway amino-acid biosynthesis; L-arginine biosynthesis; N(2)-acetyl-L-ornithine from L-glutamate: step 3/4. Its function is as follows. Catalyzes the NADPH-dependent reduction of N-acetyl-5-glutamyl phosphate to yield N-acetyl-L-glutamate 5-semialdehyde. This Methanococcus maripaludis (strain C5 / ATCC BAA-1333) protein is N-acetyl-gamma-glutamyl-phosphate reductase.